The sequence spans 154 residues: Fucose mutarotase (154 aa).

His24 serves as the catalytic Proton donor. Asp32 contributes to the substrate binding site. The active site involves Asp69. Residues Met79, Tyr120, Tyr138, and Asn140 each coordinate substrate. Residue Tyr120 is part of the active site.

It belongs to the RbsD / FucU family. In terms of assembly, mainly homodimer, but also exists as homotetramer, homooctamer, and homodecamer. The homodimeric form seems catalytically inactive.

The enzyme catalyses alpha-L-fucose = beta-L-fucose. Its pathway is carbohydrate metabolism; L-fucose metabolism. Functionally, involved in the interconversion between alpha- and beta-L-fucoses. L-Fucose (6-deoxy-L-galactose) exists as alpha-L-fucose (29.5%) and beta-L-fucose (70.5%), the beta-form is metabolized through the salvage pathway. GDP-L-fucose formed either by the de novo or salvage pathways is transported into the endoplasmic reticulum, where it serves as a substrate for N- and O-glycosylations by fucosyltransferases. Fucosylated structures expressed on cell surfaces or secreted in biological fluids are believed to play a critical role in cell-cell adhesion and recognition processes. The protein is Fucose mutarotase (FUOM) of Homo sapiens (Human).